A 54-amino-acid chain; its full sequence is Ribulose bisphosphate carboxylase large chain (54 aa).

The propeptide occupies 1-2 (MS). Pro3 carries the N-acetylproline modification. N6,N6,N6-trimethyllysine is present on Lys14.

The protein belongs to the RuBisCO large chain family. Type I subfamily. In terms of assembly, heterohexadecamer of 8 large chains and 8 small chains.

Its subcellular location is the plastid. It localises to the chloroplast. It catalyses the reaction 2 (2R)-3-phosphoglycerate + 2 H(+) = D-ribulose 1,5-bisphosphate + CO2 + H2O. It carries out the reaction D-ribulose 1,5-bisphosphate + O2 = 2-phosphoglycolate + (2R)-3-phosphoglycerate + 2 H(+). Its function is as follows. RuBisCO catalyzes two reactions: the carboxylation of D-ribulose 1,5-bisphosphate, the primary event in carbon dioxide fixation, as well as the oxidative fragmentation of the pentose substrate in the photorespiration process. Both reactions occur simultaneously and in competition at the same active site. This Icacina mannii protein is Ribulose bisphosphate carboxylase large chain (rbcL).